We begin with the raw amino-acid sequence, 361 residues long: Outer membrane protein P2 (361 aa).

The signal sequence occupies residues 1 to 20; the sequence is MKKTLAALIVGAFAASAANA.

This sequence belongs to the Gram-negative porin family. Homotrimer.

Its subcellular location is the cell outer membrane. Functionally, forms pores that allow passive diffusion of small molecules across the outer membrane. In Haemophilus influenzae, this protein is Outer membrane protein P2 (ompP2).